The chain runs to 92 residues: Small ribosomal subunit protein uS19 (92 aa).

The protein belongs to the universal ribosomal protein uS19 family.

Functionally, protein S19 forms a complex with S13 that binds strongly to the 16S ribosomal RNA. The protein is Small ribosomal subunit protein uS19 of Bradyrhizobium sp. (strain BTAi1 / ATCC BAA-1182).